The chain runs to 474 residues: A-type ATP synthase subunit B (474 aa).

This sequence belongs to the ATPase alpha/beta chains family. Has multiple subunits with at least A(3), B(3), C, D, E, F, H, I and proteolipid K(x).

Its subcellular location is the cell membrane. Component of the A-type ATP synthase that produces ATP from ADP in the presence of a proton gradient across the membrane. The B chain is a regulatory subunit. This is A-type ATP synthase subunit B from Halorubrum lacusprofundi (strain ATCC 49239 / DSM 5036 / JCM 8891 / ACAM 34).